A 198-amino-acid chain; its full sequence is Ribonuclease HII (198 aa).

An RNase H type-2 domain is found at 10-198; that stretch reads QLVAGVDEVG…PVKRALGLAS (189 aa). 3 residues coordinate a divalent metal cation: D16, E17, and D108.

It belongs to the RNase HII family. It depends on Mn(2+) as a cofactor. Mg(2+) serves as cofactor.

It localises to the cytoplasm. It carries out the reaction Endonucleolytic cleavage to 5'-phosphomonoester.. Endonuclease that specifically degrades the RNA of RNA-DNA hybrids. The polypeptide is Ribonuclease HII (Escherichia coli O45:K1 (strain S88 / ExPEC)).